Consider the following 78-residue polypeptide: Acyl carrier protein (78 aa).

The Carrier domain maps to 2-77 (STIEERVKKI…AAIDYVTSHQ (76 aa)). O-(pantetheine 4'-phosphoryl)serine is present on S37.

It belongs to the acyl carrier protein (ACP) family. In terms of processing, 4'-phosphopantetheine is transferred from CoA to a specific serine of apo-ACP by AcpS. This modification is essential for activity because fatty acids are bound in thioester linkage to the sulfhydryl of the prosthetic group.

The protein resides in the cytoplasm. The protein operates within lipid metabolism; fatty acid biosynthesis. Carrier of the growing fatty acid chain in fatty acid biosynthesis. In Pseudomonas fluorescens (strain SBW25), this protein is Acyl carrier protein.